We begin with the raw amino-acid sequence, 408 residues long: Bone morphogenetic protein 4 (408 aa).

The first 19 residues, 1–19 (MIPGNRMLMVVLLCQVLLG), serve as a signal peptide directing secretion. Positions 20–292 (GATDASLIPE…HTLTRRRAKR (273 aa)) are excised as a propeptide. S91 carries the phosphoserine modification. Positions 91–113 (SGEEEEEEQSQGTGLEYPERPAS) are disordered. Residues N144 and N209 are each glycosylated (N-linked (GlcNAc...) asparagine). The disordered stretch occupies residues 281–307 (RGHTLTRRRAKRSPKHHPQRSRKKNKN). Residues 284–307 (TLTRRRAKRSPKHHPQRSRKKNKN) are compositionally biased toward basic residues. 3 cysteine pairs are disulfide-bonded: C308-C373, C337-C405, and C341-C407. N350 and N365 each carry an N-linked (GlcNAc...) asparagine glycan.

It belongs to the TGF-beta family. Homodimer; disulfide-linked. Interacts with GREM2. Part of a complex consisting of TWSG1 and CHRD. Interacts with the serine proteases, HTRA1 and HTRA3; the interaction with either inhibits BMP4-mediated signaling. The HTRA protease activity is required for this inhibition. Interacts with SOSTDC1. Interacts with FBN1 (via N-terminal domain) and FBN2. Interacts with type I receptor BMPR1A. Interacts with type II receptor BMPR2. Interacts with FSTL1; this interaction inhibits the activation of the BMP4/Smad1/5/8 signaling pathway. Interacts with SCUBE3. Interacts with TGFBR3.

The protein resides in the secreted. It localises to the extracellular space. Its subcellular location is the extracellular matrix. Growth factor of the TGF-beta superfamily that plays essential roles in many developmental processes, including neurogenesis, vascular development, angiogenesis and osteogenesis. Acts in concert with PTHLH/PTHRP to stimulate ductal outgrowth during embryonic mammary development and to inhibit hair follicle induction. Initiates the canonical BMP signaling cascade by associating with type I receptor BMPR1A and type II receptor BMPR2. Once all three components are bound together in a complex at the cell surface, BMPR2 phosphorylates and activates BMPR1A. In turn, BMPR1A propagates signal by phosphorylating SMAD1/5/8 that travel to the nucleus and act as activators and repressors of transcription of target genes. Positively regulates the expression of odontogenic development regulator MSX1 via inducing the IPO7-mediated import of SMAD1 to the nucleus. Required for MSX1-mediated mesenchymal molar tooth bud development beyond the bud stage, via promoting Wnt signaling. Acts as a positive regulator of odontoblast differentiation during mesenchymal tooth germ formation, expression is repressed during the bell stage by MSX1-mediated inhibition of CTNNB1 signaling. Able to induce its own expression in dental mesenchymal cells and also in the neighboring dental epithelial cells via an MSX1-mediated pathway. Can also signal through non-canonical BMP pathways such as ERK/MAP kinase, PI3K/Akt, or SRC cascades. For example, induces SRC phosphorylation which, in turn, activates VEGFR2, leading to an angiogenic response. The chain is Bone morphogenetic protein 4 from Rattus norvegicus (Rat).